Consider the following 242-residue polypeptide: Glycerol-3-phosphate acyltransferase (242 aa).

Helical transmembrane passes span 7 to 27 (ISLLVILSLLIGYLFGSIMFA), 61 to 81 (IAIGFFEIIKSVIPFSIILLI), 102 to 122 (YYLTYLAPLAAIFGHMYPVYF), 135 to 155 (GFVFVVSPWWFLIIALTWWTI), 162 to 182 (VSLASIVCFIIFLFLPYIPWL), and 201 to 221 (DWYIIVFFAIANTILSTIIIW).

It belongs to the PlsY family. As to quaternary structure, probably interacts with PlsX.

It localises to the cell membrane. It catalyses the reaction an acyl phosphate + sn-glycerol 3-phosphate = a 1-acyl-sn-glycero-3-phosphate + phosphate. It participates in lipid metabolism; phospholipid metabolism. In terms of biological role, catalyzes the transfer of an acyl group from acyl-phosphate (acyl-PO(4)) to glycerol-3-phosphate (G3P) to form lysophosphatidic acid (LPA). This enzyme utilizes acyl-phosphate as fatty acyl donor, but not acyl-CoA or acyl-ACP. This chain is Glycerol-3-phosphate acyltransferase, found in Mycoplasmoides gallisepticum (strain R(low / passage 15 / clone 2)) (Mycoplasma gallisepticum).